The sequence spans 344 residues: Cell adhesion molecule CEACAM6 (344 aa).

An N-terminal signal peptide occupies residues 1 to 34 (MGPPSAPPCRLHVPWKEVLLTASLLTFWNPPTTA). One can recognise an Ig-like V-type domain in the interval 35-142 (KLTIESTPFN…EATGQFHVYP (108 aa)). 12 N-linked (GlcNAc...) asparagine glycosylation sites follow: asparagine 104, asparagine 111, asparagine 115, asparagine 152, asparagine 173, asparagine 197, asparagine 224, asparagine 256, asparagine 274, asparagine 288, asparagine 292, and asparagine 309. Ig-like C2-type domains are found at residues 145–232 (PKPS…VTLN) and 240–314 (PTIS…TTVT). Residues cysteine 167 and cysteine 215 are joined by a disulfide bond. The cysteines at positions 259 and 299 are disulfide-linked. Residue glycine 320 is the site of GPI-anchor amidated glycine attachment. The propeptide at 321 to 344 (SAPVLSAVATVGITIGVLARVALI) is removed in mature form.

The protein belongs to the immunoglobulin superfamily. CEA family. As to quaternary structure, homodimer; homodimerizes via its Ig-like V-type domain. Heterodimer with CEACAM8; heterodimerizes via its Ig-like V-type domain. In terms of processing, glycosylated. As to expression, expressed in neutrophils. Expressed in columnar epithelial and goblet cells of the colon. Expressed in numerous tumor cell lines (at protein level).

The protein resides in the cell membrane. Its subcellular location is the apical cell membrane. It localises to the cell surface. Cell surface glycoprotein that plays a role in cell adhesion and tumor progression. Intercellular adhesion occurs in a calcium- and fibronectin-independent manner. Mediates homophilic and heterophilic cell adhesion with other carcinoembryonic antigen-related cell adhesion molecules, such as CEACAM5 and CEACAM8. Heterophilic interaction with CEACAM8 occurs in activated neutrophils. Plays a role in neutrophil adhesion to cytokine-activated endothelial cells. Plays a role in cell migration and cell adhesion to endothelial cells. This is Cell adhesion molecule CEACAM6 from Homo sapiens (Human).